Consider the following 83-residue polypeptide: MSYYGNGGYNPYGAYGNVPPPVYGTPGLAPPTVHVHTDGGHHHGHHHHHHSFLHELGHALTGHHHHHHGHHFGHHHHHHHGHH.

The tract at residues 62-83 (GHHHHHHGHHFGHHHHHHHGHH) is disordered.

Weakly expressed in the intestine, but expression is up-regulated in response to Cu(2+).

Its function is as follows. Plays a role in the stress response to heavy metals such as copper, probably in a fos-1/kgb-1-dependent manner. This chain is Protein kreg-1, found in Caenorhabditis elegans.